Here is a 496-residue protein sequence, read N- to C-terminus: Putative ammonium transporter 1 member 5 (496 aa).

The next 11 helical transmembrane spans lie at 50–70 (LLFS…LCAG), 85–105 (VLDA…FAFG), 131–151 (FFLY…GSIA), 156–176 (FVAY…VVSH), 202–222 (FAGS…GALI), 246–266 (LVVL…PGSF), 284–306 (GIGR…TLFG), 314–334 (WNVT…TAGC), 336–356 (VVDP…LIGC), 369–389 (LEAA…VGLF), and 422–442 (LVQI…LFFI). Ser485 is modified (phosphoserine).

This sequence belongs to the ammonia transporter channel (TC 1.A.11.2) family.

The protein resides in the membrane. Its function is as follows. Involved in ammonium transport. The polypeptide is Putative ammonium transporter 1 member 5 (AMT1-5) (Arabidopsis thaliana (Mouse-ear cress)).